Reading from the N-terminus, the 495-residue chain is MAQVINTNSLSLLTQNNLNKSQSALGTAIERLSSGLRINSAKDDAAGQAIANRFTANIKGLTQASRNANDGISIAQTTEGALNEINNNLQRVRELAVQSANSTNSQSDLDSIQAEITQRLNEIDRVSGQTQFNGVKVLAQDNTLTIQVGANNGETIDIDLKQINSQTLGLDTLNVQKKYDVKSEAVTPSATLSTTALDGAGLKTGTGSTTDTGSIKDGKVYYNSTSKNYYVEVEFTDATDQTNKGGFYKVNVADDGAVTMTAATTKEATTPTGITEVTQVQKPVAAPAAIQAQLTAAHVTGADTAEMVKMSYTDKNGKTIDGGFGVKVGADIYAATKNKDGSFSINTTEYTDKDGNTKTALNQLGGADGKTEVVSIDGKTYNASKAAGHNFKAQPELAEAAAATTENPLAKIDAALAQVDALRSDLGAVQNRFNSAITNLGNTVNNLSSARSRIEDSDYATEVSNMSRAQILQQAGTSVLAQANQVPQNVLSLLR.

Belongs to the bacterial flagellin family.

The protein localises to the secreted. It localises to the bacterial flagellum. Its function is as follows. Flagellin is the subunit protein which polymerizes to form the filaments of bacterial flagella. The sequence is that of Flagellin (fliC) from Salmonella paratyphi A (strain ATCC 9150 / SARB42).